A 2359-amino-acid chain; its full sequence is Voltage-dependent T-type calcium channel subunit alpha-1H (2359 aa).

The tract at residues 1–63 (MTEGTLAADE…PGTECGADLG (63 aa)) is disordered. At 1-100 (MTEGTLAADE…SWCLRLVCNP (100 aa)) the chain is on the cytoplasmic side. A compositionally biased stretch (low complexity) spans 24–36 (APVRASPASPGAP). An I repeat occupies 87 to 422 (TRPRSWCLRL…LCLVVIATQF (336 aa)). Residues 101–119 (WFEHISMLVIMLNCVTLGM) form a helical membrane-spanning segment. Residues 120–141 (FRPCEDVECRSERCSILEAFDD) are Extracellular-facing. D140 serves as a coordination point for Zn(2+). A helical membrane pass occupies residues 142–160 (FIFAFFAVEMVIKMVALGL). Topologically, residues 161–169 (FGQKCYLGD) are cytoplasmic. A helical transmembrane segment spans residues 170–184 (TWNRLDFFIVMAGMM). Over 185 to 193 (EYSLDGHNV) the chain is Extracellular. The Zn(2+) site is built by D189 and H191. N192 is a glycosylation site (N-linked (GlcNAc...) asparagine). Residues 194 to 212 (SLSAIRTVRVLRPLRAINR) traverse the membrane as a helical segment. Residues 213-232 (VPSMRILVTLLLDTLPMLGN) lie on the Cytoplasmic side of the membrane. A helical membrane pass occupies residues 233–253 (VLLLCFFVFFIFGIVGVQLWA). Residues 254–394 (GLLRNRCFLD…YYVMDAHSFY (141 aa)) are Extracellular-facing. N-linked (GlcNAc...) asparagine glycosylation is present at N271. A helical membrane pass occupies residues 395-419 (NFIYFILLIIMGSFFMINLCLVVIA). Over 420–790 (TQFSETKQRE…GKLRRIVDSK (371 aa)) the chain is Cytoplasmic. Disordered stretches follow at residues 490 to 573 (VDPS…SESV), 620 to 656 (GTVN…SPRP), and 737 to 769 (GDCR…ASQP). Over residues 503–532 (RRPRRAGRRTASVHHLVYHHHHHHHHHYHF) the composition is skewed to basic residues. Residues 557–566 (PPSPPSPGHG) show a composition bias toward pro residues. The segment covering 620-631 (GTVNSKGGTSSR) has biased composition (polar residues). An II repeat occupies 776–1015 (WASFSGKLRR…LLVAILVEGF (240 aa)). The helical transmembrane segment at 791–811 (YFNRGIMAAILVNTLSMGVEY) threads the bilayer. At 812–824 (HEQPEELTNALEI) the chain is on the extracellular side. Residues 825–846 (SNIVFTSMFALEMLLKLLACGP) form a helical membrane-spanning segment. Residues 847–852 (LGYIRN) are Cytoplasmic-facing. Residues 853–871 (PYNIFDGIVVVISVWEIVG) traverse the membrane as a helical segment. Over 872 to 879 (QANGGLSV) the chain is Extracellular. A helical membrane pass occupies residues 880-903 (LRTFRLLRVLKLVRFLPALRRQLV). Topologically, residues 904-914 (VLMRTMDNVAT) are cytoplasmic. Residues 915–935 (FCMLLMLFIFIFSILGMHLFG) form a helical membrane-spanning segment. Residues 936–987 (CKFSLKTDSGDTVPDRKNFDSLLWAIVTVFQILTQEDWNVVLYNGMASTSSW) are Extracellular-facing. A helical transmembrane segment spans residues 988–1012 (AALYFVALMTFGNYVLFNLLVAILV). At 1013-1301 (EGFQAEGDAT…NRLRVSCQKV (289 aa)) the chain is on the cytoplasmic side. Residues 1061 to 1197 (GHLEGRGSLP…GASPGPRATP (137 aa)) form a disordered region. The span at 1117-1126 (SLASLRSSPC) shows a compositional bias: polar residues. The span at 1130-1147 (GPNSAGSSRRSSWNSLGR) shows a compositional bias: low complexity. The III repeat unit spans residues 1292 to 1569 (NRLRVSCQKV…MFVGVVVENF (278 aa)). Residues 1302 to 1324 (IAHKMFDHVVLVFIFLNCITIAL) form a helical membrane-spanning segment. Over 1325 to 1342 (ERPDIDPGSTERAFLSVS) the chain is Extracellular. The chain crosses the membrane as a helical span at residues 1343–1363 (NYIFTAIFVVEMMVKVVALGL). The Cytoplasmic segment spans residues 1364-1373 (LWGEHAYLQS). Residues 1374-1393 (SWNVLDGLLVLVSLVDIIVA) traverse the membrane as a helical segment. Over 1394-1407 (MASAGGAKILGVLR) the chain is Extracellular. The helical transmembrane segment at 1408–1429 (VLRLLRTLRPLRVISRAPGLKL) threads the bilayer. Residues 1430 to 1439 (VVETLISSLR) are Cytoplasmic-facing. A helical transmembrane segment spans residues 1440–1463 (PIGNIVLICCAFFIIFGILGVQLF). Topologically, residues 1464–1540 (KGKFYYCEGT…DQQPVQNHNP (77 aa)) are extracellular. N1477 carries N-linked (GlcNAc...) asparagine glycosylation. The chain crosses the membrane as a helical span at residues 1541–1566 (WMLLYFISFLLIVSFFVLNMFVGVVV). Topologically, residues 1567 to 1621 (ENFHKCRQHQEAEEARRREEKRLRRLERRRRKAQRRPYYADYSHTRRSIHSLCTS) are cytoplasmic. The IV repeat unit spans residues 1607–1868 (DYSHTRRSIH…VVVAVLMKHL (262 aa)). Residues 1622 to 1642 (HYLDLFITFIICLNVITMSME) form a helical membrane-spanning segment. Over 1643 to 1656 (HYNQPKSLDEALKY) the chain is Extracellular. A helical transmembrane segment spans residues 1657 to 1678 (CNYVFTIVFVFEAALKLVAFGF). The Cytoplasmic portion of the chain corresponds to 1679–1685 (RRFFKDR). A helical membrane pass occupies residues 1686 to 1704 (WNQLDLAIVLLSIMGIALE). Topologically, residues 1705–1718 (EIEMNAALPINPTI) are extracellular. Residues 1719–1742 (IRIMRVLRIARVLKLLKMATGMRA) traverse the membrane as a helical segment. Residues 1743 to 1756 (LLDTVVQALPQVGN) are Cytoplasmic-facing. A helical transmembrane segment spans residues 1757–1777 (LGLLFMLLFFIYAALGVELFG). The Extracellular portion of the chain corresponds to 1778 to 1840 (RLECSEDNPC…KHCLSYLPAL (63 aa)). Residues 1841–1868 (SPVYFVTFMLVAQFVLVNVVVAVLMKHL) form a helical membrane-spanning segment. Residues 1869-2359 (EESNKEARED…APDDSGDEPV (491 aa)) lie on the Cytoplasmic side of the membrane. The span at 1891–1911 (QGSTAQPPPTAQESQGTQPDT) shows a compositional bias: polar residues. Disordered stretches follow at residues 1891–1913 (QGST…DTPN), 1974–2003 (SFQV…PRSL), 2016–2258 (HSES…GERW), and 2335–2359 (PQTP…DEPV). The segment covering 2016–2026 (HSESLEGKVDD) has biased composition (basic and acidic residues). A compositionally biased stretch (acidic residues) spans 2086 to 2096 (DEAEAADPADE). Residues 2166 to 2181 (GESHLESGEVRGRASE) are compositionally biased toward basic and acidic residues.

It belongs to the calcium channel alpha-1 subunit (TC 1.A.1.11) family. CACNA1H subfamily. Interacts (via N-terminal cytoplasmic domain) with STAC. In terms of processing, in response to raising of intracellular calcium, the T-type channels are activated by CaM-kinase II. In terms of tissue distribution, expressed in brain.

It localises to the cell membrane. It catalyses the reaction Ca(2+)(in) = Ca(2+)(out). Functionally, voltage-sensitive calcium channel that gives rise to T-type calcium currents. T-type calcium channels belong to the 'low-voltage activated (LVA)' group. A particularity of this type of channel is an opening at quite negative potentials, and a voltage-dependent inactivation. T-type channels serve pacemaking functions in both central neurons and cardiac nodal cells and support calcium signaling in secretory cells and vascular smooth muscle. They may also be involved in the modulation of firing patterns of neurons. In the adrenal zona glomerulosa, participates in the signaling pathway leading to aldosterone production in response to either AGT/angiotensin II, or hyperkalemia. This Rattus norvegicus (Rat) protein is Voltage-dependent T-type calcium channel subunit alpha-1H (Cacna1h).